The sequence spans 311 residues: MSWFQKLMPSRIRTDASERSRSVPEGLWTKCGHCSAVLYRPELERNQEVCPKCGDHMRIGARRRLAGFLDAEGQVEIGADVQPVDALRFRDSKKYRDRLAQAQKGTGERDALVAMQGRLRGMPVVAVAFEFSFMGGSMGSVVGERFVRAADTAREQRVPLVCFSASGGARMQEGLFSLMQMAKTSAALARLSEEGVPFVSVLTDPTMGGVSASLAMLGDLVVAEPGALIGFAGPRVIEQTVRETLPEGFQRAEFLLEHGAIDQIIDRREMADRLHRILAMLTHQPAAEAADAPEAGEQPSEATDPVGEHWD.

One can recognise a CoA carboxyltransferase N-terminal domain in the interval 27-296 (LWTKCGHCSA…AEAADAPEAG (270 aa)). Positions 31, 34, 50, and 53 each coordinate Zn(2+). The C4-type zinc finger occupies 31–53 (CGHCSAVLYRPELERNQEVCPKC). The span at 286-299 (AAEAADAPEAGEQP) shows a compositional bias: low complexity. The segment at 286-311 (AAEAADAPEAGEQPSEATDPVGEHWD) is disordered.

It belongs to the AccD/PCCB family. Acetyl-CoA carboxylase is a heterohexamer composed of biotin carboxyl carrier protein (AccB), biotin carboxylase (AccC) and two subunits each of ACCase subunit alpha (AccA) and ACCase subunit beta (AccD). It depends on Zn(2+) as a cofactor.

The protein resides in the cytoplasm. It carries out the reaction N(6)-carboxybiotinyl-L-lysyl-[protein] + acetyl-CoA = N(6)-biotinyl-L-lysyl-[protein] + malonyl-CoA. Its pathway is lipid metabolism; malonyl-CoA biosynthesis; malonyl-CoA from acetyl-CoA: step 1/1. Functionally, component of the acetyl coenzyme A carboxylase (ACC) complex. Biotin carboxylase (BC) catalyzes the carboxylation of biotin on its carrier protein (BCCP) and then the CO(2) group is transferred by the transcarboxylase to acetyl-CoA to form malonyl-CoA. The protein is Acetyl-coenzyme A carboxylase carboxyl transferase subunit beta of Alkalilimnicola ehrlichii (strain ATCC BAA-1101 / DSM 17681 / MLHE-1).